Consider the following 37-residue polypeptide: Cytochrome b6-f complex subunit 5 (37 aa).

A helical transmembrane segment spans residues 5-25 (LLSGIVLGLIPITLAGLFVTA).

It belongs to the PetG family. As to quaternary structure, the 4 large subunits of the cytochrome b6-f complex are cytochrome b6, subunit IV (17 kDa polypeptide, PetD), cytochrome f and the Rieske protein, while the 4 small subunits are PetG, PetL, PetM and PetN. The complex functions as a dimer.

The protein localises to the plastid. The protein resides in the chloroplast thylakoid membrane. Component of the cytochrome b6-f complex, which mediates electron transfer between photosystem II (PSII) and photosystem I (PSI), cyclic electron flow around PSI, and state transitions. PetG is required for either the stability or assembly of the cytochrome b6-f complex. The sequence is that of Cytochrome b6-f complex subunit 5 from Zygnema circumcarinatum (Green alga).